Here is a 417-residue protein sequence, read N- to C-terminus: uncharacterized protein (417 aa).

Disordered regions lie at residues 1-41 (MDSE…EDQA) and 233-262 (QDSA…STRS). Residues 31 to 41 (DEDHIFHEDQA) are compositionally biased toward basic and acidic residues. Residues 235–245 (SAYNDQAPSTS) show a composition bias toward polar residues.

This is an uncharacterized protein from Caenorhabditis elegans.